A 545-amino-acid chain; its full sequence is Thermosome subunit beta (545 aa).

This sequence belongs to the TCP-1 chaperonin family. As to quaternary structure, forms a Heterooligomeric complex of two stacked eight-membered rings.

Functionally, molecular chaperone; binds unfolded polypeptides in vitro, and has a weak ATPase activity. The polypeptide is Thermosome subunit beta (thsB) (Thermococcus sp. (strain KS-8)).